Reading from the N-terminus, the 187-residue chain is Hypoxanthine/guanine phosphoribosyltransferase (187 aa).

The protein belongs to the purine/pyrimidine phosphoribosyltransferase family. Archaeal HPRT subfamily. As to quaternary structure, homodimer.

It localises to the cytoplasm. It catalyses the reaction IMP + diphosphate = hypoxanthine + 5-phospho-alpha-D-ribose 1-diphosphate. It carries out the reaction GMP + diphosphate = guanine + 5-phospho-alpha-D-ribose 1-diphosphate. The protein operates within purine metabolism; IMP biosynthesis via salvage pathway; IMP from hypoxanthine: step 1/1. Catalyzes a salvage reaction resulting in the formation of IMP that is energically less costly than de novo synthesis. This Methanopyrus kandleri (strain AV19 / DSM 6324 / JCM 9639 / NBRC 100938) protein is Hypoxanthine/guanine phosphoribosyltransferase.